We begin with the raw amino-acid sequence, 27 residues long: Protein YqfI (27 aa).

In Escherichia coli (strain K12), this protein is Protein YqfI.